Reading from the N-terminus, the 198-residue chain is HTH-type transcriptional repressor DhaR (198 aa).

One can recognise an HTH tetR-type domain in the interval 4–64; it reads TPVRQHLVEK…QVLQEFFSDL (61 aa).

In terms of biological role, transcriptional repressor for the dhaA haloalkane dehalogenase gene. The sequence is that of HTH-type transcriptional repressor DhaR (dhaR) from Mycobacterium sp. (strain GP1).